We begin with the raw amino-acid sequence, 186 residues long: Ribosome-recycling factor (186 aa).

It belongs to the RRF family.

The protein resides in the cytoplasm. Its function is as follows. Responsible for the release of ribosomes from messenger RNA at the termination of protein biosynthesis. May increase the efficiency of translation by recycling ribosomes from one round of translation to another. The protein is Ribosome-recycling factor of Chlorobium phaeobacteroides (strain BS1).